We begin with the raw amino-acid sequence, 522 residues long: Protein GDS1 (522 aa).

Disordered stretches follow at residues 56 to 88 (ALDD…PKKD), 222 to 268 (QQLE…SSNS), 300 to 391 (LSPS…SHNA), and 433 to 489 (STQT…SRNE). Polar residues predominate over residues 62-73 (LAGSSFSSSQEI). Over residues 74–88 (KATKPKKDFGAPKKD) the composition is skewed to basic and acidic residues. Composition is skewed to polar residues over residues 222-236 (QQLE…FNSN), 244-260 (SSNQ…SMTD), 300-314 (LSPS…LLTP), and 355-366 (SQSLSVLSTPKK). Residues 368 to 378 (SSASLSTFASS) show a composition bias toward low complexity. Residues 379-391 (KNISPDSSLSHNA) are compositionally biased toward polar residues. Over residues 439 to 467 (ESSSESSQYNSSSSSPVNSAAASSAESLS) the composition is skewed to low complexity. Over residues 468–489 (DINSSQDNGRESNPSSQESRNE) the composition is skewed to polar residues.

Its function is as follows. Involved in nuclear control of mitochondria. This chain is Protein GDS1 (GDS1), found in Saccharomyces cerevisiae (strain ATCC 204508 / S288c) (Baker's yeast).